The following is a 718-amino-acid chain: Ribosomal RNA large subunit methyltransferase K/L (718 aa).

Residues 43 to 154 (TQYRILLWSR…QDELVVSLDL (112 aa)) form the THUMP domain.

This sequence belongs to the methyltransferase superfamily. RlmKL family.

It localises to the cytoplasm. The enzyme catalyses guanosine(2445) in 23S rRNA + S-adenosyl-L-methionine = N(2)-methylguanosine(2445) in 23S rRNA + S-adenosyl-L-homocysteine + H(+). The catalysed reaction is guanosine(2069) in 23S rRNA + S-adenosyl-L-methionine = N(2)-methylguanosine(2069) in 23S rRNA + S-adenosyl-L-homocysteine + H(+). Its function is as follows. Specifically methylates the guanine in position 2445 (m2G2445) and the guanine in position 2069 (m7G2069) of 23S rRNA. The protein is Ribosomal RNA large subunit methyltransferase K/L of Histophilus somni (strain 129Pt) (Haemophilus somnus).